A 248-amino-acid chain; its full sequence is Phosphomannomutase (248 aa).

Asp-14 serves as the catalytic Nucleophile. Asp-14 and Asp-16 together coordinate Mg(2+). The Proton donor/acceptor role is filled by Asp-16. Alpha-D-mannose 1-phosphate-binding residues include Arg-23, Arg-125, Arg-136, Arg-143, Ser-181, and Asp-183. Mg(2+)-binding residues include Asp-209, Phe-221, and Thr-226.

This sequence belongs to the eukaryotic PMM family. Homodimer. Requires Mg(2+) as cofactor.

The protein localises to the cytoplasm. The enzyme catalyses alpha-D-mannose 1-phosphate = D-mannose 6-phosphate. It functions in the pathway nucleotide-sugar biosynthesis; GDP-alpha-D-mannose biosynthesis; alpha-D-mannose 1-phosphate from D-fructose 6-phosphate: step 2/2. Functionally, catalyzes the interconversion of mannose-6-phosphate to mannose-1-phosphate, the precursor for the synthesis of GDP-mannose. GDP-mannose is an essential sugar nucleotide for the synthesis of D-mannose-containing cell wall polysaccharides (galactomannans and glucomannans), glycolipids, glycoproteins and the antioxidant L-ascorbate. The chain is Phosphomannomutase from Oryza sativa subsp. indica (Rice).